A 330-amino-acid chain; its full sequence is Phosphate acyltransferase (330 aa).

Belongs to the PlsX family. In terms of assembly, homodimer. Probably interacts with PlsY.

It localises to the cytoplasm. It catalyses the reaction a fatty acyl-[ACP] + phosphate = an acyl phosphate + holo-[ACP]. It participates in lipid metabolism; phospholipid metabolism. Functionally, catalyzes the reversible formation of acyl-phosphate (acyl-PO(4)) from acyl-[acyl-carrier-protein] (acyl-ACP). This enzyme utilizes acyl-ACP as fatty acyl donor, but not acyl-CoA. This Bacillus licheniformis (strain ATCC 14580 / DSM 13 / JCM 2505 / CCUG 7422 / NBRC 12200 / NCIMB 9375 / NCTC 10341 / NRRL NRS-1264 / Gibson 46) protein is Phosphate acyltransferase.